A 636-amino-acid chain; its full sequence is DNA ligase (636 aa).

The active-site N6-AMP-lysine intermediate is Lys-113. In terms of domain architecture, BRCT spans 560–636 (NSEGIFQNQT…KSSFSKKFEK (77 aa)).

Belongs to the NAD-dependent DNA ligase family.

The enzyme catalyses NAD(+) + (deoxyribonucleotide)n-3'-hydroxyl + 5'-phospho-(deoxyribonucleotide)m = (deoxyribonucleotide)n+m + AMP + beta-nicotinamide D-nucleotide.. Functionally, catalyzes the formation of phosphodiester linkages between 5'-phosphoryl and 3'-hydroxyl groups in double-stranded DNA using NAD as a coenzyme and as the energy source for the reaction. This chain is DNA ligase, found in Acanthamoeba polyphaga (Amoeba).